We begin with the raw amino-acid sequence, 255 residues long: Proteasome subunit alpha (255 aa).

The interval 224–255 (RLEELLGERGPAQHAPEEPADPEPEPPIAPPG) is disordered.

It belongs to the peptidase T1A family. The 20S proteasome core is composed of 14 alpha and 14 beta subunits that assemble into four stacked heptameric rings, resulting in a barrel-shaped structure. The two inner rings, each composed of seven catalytic beta subunits, are sandwiched by two outer rings, each composed of seven alpha subunits. The catalytic chamber with the active sites is on the inside of the barrel. Has a gated structure, the ends of the cylinder being occluded by the N-termini of the alpha-subunits. Is capped by the proteasome-associated ATPase, ARC.

The protein localises to the cytoplasm. It functions in the pathway protein degradation; proteasomal Pup-dependent pathway. Its activity is regulated as follows. The formation of the proteasomal ATPase ARC-20S proteasome complex, likely via the docking of the C-termini of ARC into the intersubunit pockets in the alpha-rings, may trigger opening of the gate for substrate entry. Interconversion between the open-gate and close-gate conformations leads to a dynamic regulation of the 20S proteasome proteolysis activity. Component of the proteasome core, a large protease complex with broad specificity involved in protein degradation. The chain is Proteasome subunit alpha from Nocardioides sp. (strain ATCC BAA-499 / JS614).